Reading from the N-terminus, the 147-residue chain is Transcriptional regulator MraZ (147 aa).

2 SpoVT-AbrB domains span residues 5 to 52 and 81 to 124; these read NHPT…PMEE and GQVV…NAEH.

It belongs to the MraZ family. Forms oligomers.

Its subcellular location is the cytoplasm. The protein localises to the nucleoid. In Koribacter versatilis (strain Ellin345), this protein is Transcriptional regulator MraZ.